The primary structure comprises 186 residues: Large ribosomal subunit protein uL5c (186 aa).

Belongs to the universal ribosomal protein uL5 family. Part of the 50S ribosomal subunit; contacts the 5S rRNA.

The protein resides in the plastid. It localises to the chloroplast. In terms of biological role, binds 5S rRNA, forms part of the central protuberance of the 50S subunit. The chain is Large ribosomal subunit protein uL5c (rpl5) from Pleurastrum terricola (Filamentous green alga).